We begin with the raw amino-acid sequence, 475 residues long: MLASLTSRSATSFSIIWALVSAILILSILIWLIITIFFAWNLHLKNNKKRTKYHLEPEQIKHKIIQNKTKLGKMLDFYQQQINTTATELKWLDGQFQQIDETDKKKAHQIAIRLARNQLLQQLSVKLDQKQFSQRANNELQKLKLSNLESFTNQKIKWDQEGMKSAVSRVTINEWTFNHFAGKNRVYWDYFKQVCDVDCSIKPLKDQLEITFSSWSLLKRLQAKNLFNKLIAQSSSVKMSEKLINNALQLVQDNLALQASESGNKLLKEFELSCTNTQLVQLLGFQQFYFGTNLLSLLDLSRSIAVLVRFLNEHCKWELNERLLVETALFNNLQWVNNNDFFLKSHNDLKQLHLSAEQLAIIEQQNRPFYIDAYALLIAGVKQMLMEHDAVEPKQIHFHNAKKVMESFQLFGIDQLALIEYNNCLYGFVTTKLYEIKQLDDLALFKVLFKSFLNKHLKQKFATISLFVNTQTLMI.

The chain crosses the membrane as a helical span at residues 19–39 (LVSAILILSILIWLIITIFFA).

Its subcellular location is the membrane. This is an uncharacterized protein from Mycoplasma pneumoniae (strain ATCC 29342 / M129 / Subtype 1) (Mycoplasmoides pneumoniae).